Reading from the N-terminus, the 1020-residue chain is 5'-3' exoribonuclease 3 (1020 aa).

The tract at residues 113–144 is disordered; the sequence is QQRSRRFRSAKDASDAAAEEERLREEFEREGR. The segment covering 121-144 has biased composition (basic and acidic residues); that stretch reads SAKDASDAAAEEERLREEFEREGR. The segment at 262-279 adopts a CCHC-type zinc-finger fold; sequence ERCFLCGQMGHFASNCEG. Disordered regions lie at residues 411-440 and 452-483; these read QHQRQAERVKRDKAGKATKRMDDEAPTVQP and RLASAPTPSPFQSNDGRSAPHQKVRRLSPGSS. The segment covering 414-433 has biased composition (basic and acidic residues); that stretch reads RQAERVKRDKAGKATKRMDD. Positions 487–523 form a coiled coil; sequence AIVDVENSLESDERENKEELKTKLKELIREKSDAFNS. Residues 831–844 show a composition bias toward low complexity; that stretch reads NNHGMHNNHGMHNN. Disordered stretches follow at residues 831-859, 875-897, and 911-1020; these read NNHGMHNNHGMHNNQGRQNPPGSVSGRHL, TDRYQTPTDVPAPGYGYNPPQYV, and PGAQ…RHRY. Composition is skewed to low complexity over residues 911-923 and 960-972; these read PGAQGYAQPAPYQ and GNHQNQHQQQQWH. A compositionally biased stretch (basic residues) spans 1000–1020; the sequence is RGRGRGSHHHHDQGGNPRHRY.

Belongs to the 5'-3' exonuclease family. XRN2/RAT1 subfamily. In terms of tissue distribution, expressed in roots, leaves, stems and flowers.

Its subcellular location is the nucleus. In terms of biological role, possesses 5'-&gt;3' exoribonuclease activity. Acts as an endogenous post-transcriptional gene silencing (PTGS) suppressor. Degrades miRNA-derived loops, excised during miRNA maturation in the nucleus. Required for proper development. Involved in pre-rRNA processing. Involved with XRN2 in the 5'-end exonucleolytic processing of 5.8S and 25S rRNAs. Contributes with XRN2 to polyadenylation-dependent nuclear RNA surveillance. Involved in the degradation of aberrant polyadenylated pre-rRNA through 5'-end processing. The chain is 5'-3' exoribonuclease 3 from Arabidopsis thaliana (Mouse-ear cress).